The following is a 130-amino-acid chain: Fumarate reductase subunit D (130 aa).

A run of 3 helical transmembrane segments spans residues 35–55 (FAMI…LGVI), 67–87 (SFAT…LPMW), and 110–130 (IACY…IFMI).

Belongs to the FrdD family. Part of an enzyme complex containing four subunits: a flavoprotein (FrdA), an iron-sulfur protein (FrdB), and two hydrophobic anchor proteins (FrdC and FrdD).

It localises to the cell inner membrane. Its function is as follows. Anchors the catalytic components of the fumarate reductase complex to the cell membrane, binds quinones. This is Fumarate reductase subunit D from Vibrio cholerae serotype O1 (strain M66-2).